Here is a 177-residue protein sequence, read N- to C-terminus: Transcriptional regulator MET31 (177 aa).

The C2H2-type zinc-finger motif lies at 95-117 (YSCAKCQLKFSRSSDLRRHEKVH).

As to quaternary structure, interacts with MET4 and MET28.

The protein localises to the cytoplasm. Its subcellular location is the nucleus. Functionally, auxiliary transcriptional regulator of sulfur amino acid metabolism. Involved in the transcriptional activation of MET28. This chain is Transcriptional regulator MET31 (MET31), found in Saccharomyces cerevisiae (strain ATCC 204508 / S288c) (Baker's yeast).